The primary structure comprises 519 residues: Ribose import ATP-binding protein RbsA 2 (519 aa).

ABC transporter domains follow at residues 15 to 252 (FRLR…VGRP) and 262 to 506 (HEPG…TGVR). Residue 47–54 (GENGAGKS) participates in ATP binding.

The protein belongs to the ABC transporter superfamily. Ribose importer (TC 3.A.1.2.1) family. In terms of assembly, the complex is composed of an ATP-binding protein (RbsA), two transmembrane proteins (RbsC) and a solute-binding protein (RbsB).

It localises to the cell membrane. The catalysed reaction is D-ribose(out) + ATP + H2O = D-ribose(in) + ADP + phosphate + H(+). Part of the ABC transporter complex RbsABC involved in ribose import. Responsible for energy coupling to the transport system. This chain is Ribose import ATP-binding protein RbsA 2, found in Rubrobacter xylanophilus (strain DSM 9941 / JCM 11954 / NBRC 16129 / PRD-1).